Consider the following 552-residue polypeptide: HTH-type transcriptional regulator SgrR (552 aa).

The interval 163–493 (ELKPDLAHHW…DDLDTDAQQW (331 aa)) is solute-binding.

Its function is as follows. Activates the small RNA gene sgrS under glucose-phosphate stress conditions as well as yfdZ. Represses its own transcription under both stress and non-stress conditions. Might act as a sensor of the intracellular accumulation of phosphoglucose by binding these molecules in its C-terminal solute-binding domain. In Pectobacterium atrosepticum (strain SCRI 1043 / ATCC BAA-672) (Erwinia carotovora subsp. atroseptica), this protein is HTH-type transcriptional regulator SgrR.